An 801-amino-acid chain; its full sequence is Cadherin-20 (801 aa).

A signal peptide spans M1–S34. A propeptide spanning residues S35–R59 is cleaved from the precursor. The Extracellular portion of the chain corresponds to S60–R619. Cadherin domains follow at residues W61–F165, L166–F274, P275–F389, E390–F494, and F494–A610. N261 carries N-linked (GlcNAc...) asparagine glycosylation. Residues N420, N461, and N542 are each glycosylated (N-linked (GlcNAc...) asparagine). Residues G620 to L640 form a helical membrane-spanning segment. Over S641 to W801 the chain is Cytoplasmic.

Expressed in brain. Highest level of expression in the retina. In embryo it is synthesized by the forebrain, anterior neural ridge, developing visual system, primitive external granular layer of the cerebellum and a subset of neural crest cells likely to develop into melanoblasts.

Its subcellular location is the cell membrane. Functionally, cadherins are calcium-dependent cell adhesion proteins. They preferentially interact with themselves in a homophilic manner in connecting cells; cadherins may thus contribute to the sorting of heterogeneous cell types. The polypeptide is Cadherin-20 (Cdh20) (Mus musculus (Mouse)).